The chain runs to 306 residues: MSTSMSVARSLPGGPVAEQILAEVAQEVTQLRAAGVTPALATVLVGDDDASVGYIRIKQRQAVQLGFASPHVRLPASASQADLQAVVTQLSADTSVHGVLVQHPVPPHLDFDRAMQALDPEKDVDGMHPVNLGRLALGLPGPTPCTPAGIEALLAYHEVPVAGREVVVLGRGATLGRPLAMVLAQKRPTANAAVTVVHTGVPDWPRYTRRAEIVVAAAGVPGLVRPEHLRPGAVVVNGGVRYAGRRLLPDVDESCATVAGAMTPRVGGVGPTTVAMLFRNAVRAARRTRSSRTPVRLPDSGAPAGR.

NADP(+) contacts are provided by residues 170–172 (GRG), threonine 199, and valine 240. A disordered region spans residues 285-306 (ARRTRSSRTPVRLPDSGAPAGR).

It belongs to the tetrahydrofolate dehydrogenase/cyclohydrolase family. In terms of assembly, homodimer.

It catalyses the reaction (6R)-5,10-methylene-5,6,7,8-tetrahydrofolate + NADP(+) = (6R)-5,10-methenyltetrahydrofolate + NADPH. The catalysed reaction is (6R)-5,10-methenyltetrahydrofolate + H2O = (6R)-10-formyltetrahydrofolate + H(+). The protein operates within one-carbon metabolism; tetrahydrofolate interconversion. Functionally, catalyzes the oxidation of 5,10-methylenetetrahydrofolate to 5,10-methenyltetrahydrofolate and then the hydrolysis of 5,10-methenyltetrahydrofolate to 10-formyltetrahydrofolate. The polypeptide is Bifunctional protein FolD 1 (Salinispora tropica (strain ATCC BAA-916 / DSM 44818 / JCM 13857 / NBRC 105044 / CNB-440)).